Consider the following 370-residue polypeptide: Histidinol-phosphate aminotransferase (370 aa).

N6-(pyridoxal phosphate)lysine is present on Lys-222.

It belongs to the class-II pyridoxal-phosphate-dependent aminotransferase family. Histidinol-phosphate aminotransferase subfamily. In terms of assembly, homodimer. It depends on pyridoxal 5'-phosphate as a cofactor.

The catalysed reaction is L-histidinol phosphate + 2-oxoglutarate = 3-(imidazol-4-yl)-2-oxopropyl phosphate + L-glutamate. It participates in amino-acid biosynthesis; L-histidine biosynthesis; L-histidine from 5-phospho-alpha-D-ribose 1-diphosphate: step 7/9. The sequence is that of Histidinol-phosphate aminotransferase from Bacillus cytotoxicus (strain DSM 22905 / CIP 110041 / 391-98 / NVH 391-98).